The sequence spans 407 residues: Large ribosomal subunit protein uL3-like (407 aa).

A compositionally biased stretch (basic residues) spans 1–31 (MSHRKFSAPRHGHLGFLPHKRSHRHRGKVKT). Disordered stretches follow at residues 1-35 (MSHRKFSAPRHGHLGFLPHKRSHRHRGKVKTWPRD) and 383-407 (QEKRAFMGPQKKHLEKEKPETSGDL). Residues 394–407 (KHLEKEKPETSGDL) show a composition bias toward basic and acidic residues.

The protein belongs to the universal ribosomal protein uL3 family. Component of the large ribosomal subunit in striated muscle cells.

Heart- and skeletal muscle-specific component of the ribosome, which regulates muscle function. Component of the large ribosomal subunit in striated muscle cells: replaces the RPL3 paralog in the ribosome in these cells. The ribosome is a large ribonucleoprotein complex responsible for the synthesis of proteins in the cell. Inhibits myotube growth and muscle function. This Bos taurus (Bovine) protein is Large ribosomal subunit protein uL3-like (RPL3L).